The sequence spans 327 residues: Probable cell division protein WhiA (327 aa).

Residues 275-308 constitute a DNA-binding region (H-T-H motif); that stretch reads SLEELGRLADPQMTKDAVAGRIRRLLTTADKRAR.

This sequence belongs to the WhiA family.

In terms of biological role, involved in cell division and chromosome segregation. The chain is Probable cell division protein WhiA from Corynebacterium efficiens (strain DSM 44549 / YS-314 / AJ 12310 / JCM 11189 / NBRC 100395).